A 511-amino-acid polypeptide reads, in one-letter code: GATOR complex protein NPRL3 (511 aa).

A disordered region spans residues 37–58 (KPATKAPSKDPQPSSSNPGQCV).

The protein belongs to the NPR3 family. In terms of assembly, probably part of the GATOR complex.

The protein localises to the lysosome membrane. As a component of the GATOR complex may function in the amino acid-sensing branch of the TORC1 signaling pathway. This is GATOR complex protein NPRL3 (nprl-3) from Caenorhabditis elegans.